The sequence spans 517 residues: uncharacterized protein (517 aa).

3 disordered regions span residues 16 to 148, 156 to 175, and 216 to 351; these read KDES…TITK, VNKEINNNNNNNNNNNNTTT, and KLEK…EENE. Residues 48–75 are compositionally biased toward low complexity; it reads NNNNNNNNTTTTNNNTNNSNTSTSNNSK. Residues 84–112 are compositionally biased toward acidic residues; it reads FDDDDDDGDEEDEEEEDDDDDDDDDDDET. Over residues 127 to 143 the composition is skewed to pro residues; the sequence is QPQPQPQPQPQPQPPIK. A compositionally biased stretch (polar residues) spans 236–252; it reads VSSTLSNSFDPNIIHNQ. Residues 254 to 266 show a composition bias toward pro residues; the sequence is SPPPPPISIPIPL. 2 stretches are compositionally biased toward low complexity: residues 271 to 320 and 327 to 347; these read NLNN…NSNI and SSSMVNNVNNNSSDNSSSNNN. Residues 340–452 are a coiled coil; that stretch reads DNSSSNNNEE…HQNQQNSMNN (113 aa).

It belongs to the ENTR1 family.

This is an uncharacterized protein from Dictyostelium discoideum (Social amoeba).